The following is a 282-amino-acid chain: 2-dehydro-3-deoxyphosphooctonate aldolase (282 aa).

It belongs to the KdsA family.

The protein resides in the cytoplasm. It carries out the reaction D-arabinose 5-phosphate + phosphoenolpyruvate + H2O = 3-deoxy-alpha-D-manno-2-octulosonate-8-phosphate + phosphate. The protein operates within carbohydrate biosynthesis; 3-deoxy-D-manno-octulosonate biosynthesis; 3-deoxy-D-manno-octulosonate from D-ribulose 5-phosphate: step 2/3. It participates in bacterial outer membrane biogenesis; lipopolysaccharide biosynthesis. In Chromobacterium violaceum (strain ATCC 12472 / DSM 30191 / JCM 1249 / CCUG 213 / NBRC 12614 / NCIMB 9131 / NCTC 9757 / MK), this protein is 2-dehydro-3-deoxyphosphooctonate aldolase.